We begin with the raw amino-acid sequence, 491 residues long: Synaptotagmin-9 (491 aa).

The Vesicular segment spans residues 1–52 (MPGARDALCHQALQLLAELCARGALEHDSCQDFIYHLRDRARPRLRDPDISV). A cysteine motif region spans residues 9–31 (CHQALQLLAELCARGALEHDSCQ). Residues 53-73 (SLLTLVVTACGLALFGVSLFV) form a helical membrane-spanning segment. At 74–491 (SWKLCWVPWR…AHWHSLMEKR (418 aa)) the chain is on the cytoplasmic side. Over residues 91 to 104 (SKDNNQEPLNYTDT) the composition is skewed to polar residues. A disordered region spans residues 91 to 147 (SKDNNQEPLNYTDTETNEQENSEDFLDPPTPCPDSSMKISHTSPDIPLSTQPGGQEN). Positions 105 to 116 (ETNEQENSEDFL) are enriched in acidic residues. Residues 127–144 (MKISHTSPDIPLSTQPGG) are compositionally biased toward polar residues. Ser-177 is modified (phosphoserine). 2 C2 domains span residues 220–341 (ACGK…ILWK) and 352–485 (DLGE…AHWH). Ca(2+) is bound by residues Asp-251, Asp-257, Asp-309, Phe-310, Asp-311, Ser-314, Asp-317, Asp-383, Asp-389, Asp-443, and Asp-445.

It belongs to the synaptotagmin family. In terms of assembly, homodimer; disulfide-linked via the cysteine motif. Can also form heterodimers with SYT3, SYT6, SYT7 and SYT10. Interacts with DNAJC5 and SNAP25, but not with HSC70. The interaction with DNAJC5 is stimulated tenfold in presence of calcium while the interaction with SNAP25 is inhibited. Requires Ca(2+) as cofactor.

The protein resides in the cytoplasmic vesicle. It localises to the secretory vesicle. The protein localises to the synaptic vesicle membrane. May be involved in Ca(2+)-dependent exocytosis of secretory vesicles through Ca(2+) and phospholipid binding to the C2 domain or may serve as Ca(2+) sensors in the process of vesicular trafficking and exocytosis. The protein is Synaptotagmin-9 (Syt9) of Mus musculus (Mouse).